The following is a 269-amino-acid chain: Extracellular metalloprotease UREG_07765 (269 aa).

The N-terminal stretch at 1-18 (MRLSVSLLALAFGSLVAA) is a signal peptide. The N-linked (GlcNAc...) asparagine glycan is linked to N179. Position 191 (H191) interacts with Zn(2+). E192 is a catalytic residue. H195 serves as a coordination point for Zn(2+). Residues 207–227 (VSDTPPQRSSTQGCPSSRDSC) are disordered. The segment covering 210–225 (TPPQRSSTQGCPSSRD) has biased composition (polar residues). C220 and C246 are oxidised to a cystine.

This sequence belongs to the peptidase M43B family.

The protein localises to the secreted. Functionally, secreted metalloproteinase that allows assimilation of proteinaceous substrates. The protein is Extracellular metalloprotease UREG_07765 of Uncinocarpus reesii (strain UAMH 1704).